The chain runs to 997 residues: Synaptonemal complex protein 1 (997 aa).

The Mediates head to head self-assembly of N-terminal ends signature appears at 102-112 (PMSRLYSKLYK). Positions 118-121 (KKWK) match the Nuclear localization signal motif. Coiled-coil stretches lie at residues 121 to 176 (KVSI…LIKE) and 212 to 696 (YVDL…KKIS). The interval 207–363 (ETRQVYVDLN…YQLTEEKEAQ (157 aa)) is interaction with SYCE3. The interval 698-792 (EKLLGEVEKA…VSLKKQLEVE (95 aa)) is required for pH-induced assembly of C-terminal ends into antiparallel tetramers. A Nuclear localization signal motif is present at residues 701 to 704 (LGEV). A coiled-coil region spans residues 768–806 (KVALETELSNIRNELVSLKKQLEVEKEEKEKLKMEQENT). The tract at residues 805 to 997 (NTAILTDKKD…RLKEAEKLFT (193 aa)) is DNA-binding. Ser-824 is subject to Phosphoserine. A disordered region spans residues 828-863 (TSWKFDSKTTPSQNISRLSSSMDSGKSKDNRDSLRA). Residues 835–851 (KTTPSQNISRLSSSMDS) are compositionally biased toward polar residues. Residues 852 to 861 (GKSKDNRDSL) are compositionally biased toward basic and acidic residues. Positions 902–905 (KKRK) match the Nuclear localization signal motif. Thr-940 is subject to Phosphothreonine.

As to quaternary structure, structural component of synaptonemal complexes. Homotetramer that consists of an N-terminal four-helical bundle that bifurcates into two elongated C-terminal dimeric coiled coils. This tetrameric building block potentially self-assembles into a supramolecular zipper-like lattice to mediate meiotic chromosome synapsis. Self-assembly is likely initiated by local proton density at chromosome axis, which is predicted to trigger antiparallel back to back assembly of adjacent C-terminal ends into tetrameric structures that anchor to chromosomal DNA. Then the N-terminal ends are predicted to undergo cooperative antiparallel head to head assembly at the midline of synaptonemal complexes central element to form a zipper-like lattice between properly aligned homologous chromosomes. The nascent synapsis generated by SYCP1 is stabilized through interaction with central element proteins SYCE1 and SYCE2. Interacts (via tetrameric core) with SYCE3; the interaction remodels SYCP1 homotetramers to 2:1 heterotrimers with SYCE3. SYCP1/SYCE3 heterotrimers form lattice assemblies as part of the mature synaptonemal complex via both lateral and head-to-head interactions. Forms a complex with EWSR1, PRDM9, SYCP3 and REC8; complex formation is dependent of phosphorylated form of REC8 and requires PRDM9 bound to hotspot DNA; EWSR1 joins PRDM9 with the chromosomal axis through REC8. Interacts with SPO16. As to expression, testis.

It localises to the nucleus. The protein localises to the chromosome. It is found in the centromere. Its function is as follows. Major component of the transverse filaments of synaptonemal complexes, formed between homologous chromosomes during meiotic prophase. Required for normal assembly of the central element of the synaptonemal complexes. Required for normal centromere pairing during meiosis. Required for normal meiotic chromosome synapsis during oocyte and spermatocyte development and for normal male and female fertility. The polypeptide is Synaptonemal complex protein 1 (Rattus norvegicus (Rat)).